The following is an 800-amino-acid chain: Transducin beta-like protein 3 (800 aa).

Ala-2 bears the N-acetylalanine mark. WD repeat units lie at residues 64–105, 107–146, 149–190, 193–232, 245–284, 290–329, 332–372, 374–413, 419–459, 477–516, 519–560, 562–602, and 604–642; these read EDQE…RLWK, IHTA…GTHH, GSPG…CLAV, AHYS…ATRT, LPEE…CVHA, GPGR…LRKQ, GYSE…CQIL, GHTD…EVAC, GHTH…LSKG, CHDK…LLGT, GHRR…KTFE, HDAS…RTLD, and HEDK…EQAE. At Ser-257 the chain carries Phosphoserine. A Glycyl lysine isopeptide (Lys-Gly) (interchain with G-Cter in SUMO2) cross-link involves residue Lys-407.

As to quaternary structure, part of the small subunit (SSU) processome, composed of more than 70 proteins and the RNA chaperone small nucleolar RNA (snoRNA) U3.

The protein resides in the nucleus. It localises to the nucleolus. Its function is as follows. Part of the small subunit (SSU) processome, first precursor of the small eukaryotic ribosomal subunit. During the assembly of the SSU processome in the nucleolus, many ribosome biogenesis factors, an RNA chaperone and ribosomal proteins associate with the nascent pre-rRNA and work in concert to generate RNA folding, modifications, rearrangements and cleavage as well as targeted degradation of pre-ribosomal RNA by the RNA exosome. The protein is Transducin beta-like protein 3 (TBL3) of Bos taurus (Bovine).